A 204-amino-acid polypeptide reads, in one-letter code: Spermatogenesis-associated protein 46 (204 aa).

The tract at residues 101-120 (SSSSQENTYPREANRKSKHG) is disordered.

As to expression, testis-specific.

The protein resides in the nucleus membrane. In terms of biological role, plays a role in spermiogenesis and fertilization. This chain is Spermatogenesis-associated protein 46 (Spata46), found in Mus musculus (Mouse).